Here is a 191-residue protein sequence, read N- to C-terminus: Pyridoxal 5'-phosphate synthase subunit PdxT (191 aa).

Residue 48 to 50 (GES) participates in L-glutamine binding. The active-site Nucleophile is the cysteine 81. L-glutamine-binding positions include arginine 109 and 136-137 (IR). Residues histidine 172 and glutamate 174 each act as charge relay system in the active site.

Belongs to the glutaminase PdxT/SNO family. In the presence of PdxS, forms a dodecamer of heterodimers. Only shows activity in the heterodimer.

It catalyses the reaction aldehydo-D-ribose 5-phosphate + D-glyceraldehyde 3-phosphate + L-glutamine = pyridoxal 5'-phosphate + L-glutamate + phosphate + 3 H2O + H(+). It carries out the reaction L-glutamine + H2O = L-glutamate + NH4(+). The protein operates within cofactor biosynthesis; pyridoxal 5'-phosphate biosynthesis. Functionally, catalyzes the hydrolysis of glutamine to glutamate and ammonia as part of the biosynthesis of pyridoxal 5'-phosphate. The resulting ammonia molecule is channeled to the active site of PdxS. This chain is Pyridoxal 5'-phosphate synthase subunit PdxT, found in Thermus thermophilus (strain ATCC 27634 / DSM 579 / HB8).